Here is a 253-residue protein sequence, read N- to C-terminus: Imidazole glycerol phosphate synthase subunit HisF (253 aa).

Catalysis depends on residues aspartate 11 and aspartate 130.

The protein belongs to the HisA/HisF family. In terms of assembly, heterodimer of HisH and HisF.

It localises to the cytoplasm. The catalysed reaction is 5-[(5-phospho-1-deoxy-D-ribulos-1-ylimino)methylamino]-1-(5-phospho-beta-D-ribosyl)imidazole-4-carboxamide + L-glutamine = D-erythro-1-(imidazol-4-yl)glycerol 3-phosphate + 5-amino-1-(5-phospho-beta-D-ribosyl)imidazole-4-carboxamide + L-glutamate + H(+). It participates in amino-acid biosynthesis; L-histidine biosynthesis; L-histidine from 5-phospho-alpha-D-ribose 1-diphosphate: step 5/9. Functionally, IGPS catalyzes the conversion of PRFAR and glutamine to IGP, AICAR and glutamate. The HisF subunit catalyzes the cyclization activity that produces IGP and AICAR from PRFAR using the ammonia provided by the HisH subunit. The sequence is that of Imidazole glycerol phosphate synthase subunit HisF from Methylibium petroleiphilum (strain ATCC BAA-1232 / LMG 22953 / PM1).